The chain runs to 197 residues: Putative double homeobox protein 3 (197 aa).

DNA-binding regions (homeobox) lie at residues 46–105 (GRRM…LRQH) and 121–180 (GRRK…WGQS). Positions 102–127 (LRQHRRQSRPWPGRRDPQKGRRKRTA) are disordered.

It belongs to the paired homeobox family. Expressed in hepatoma Hep3B cells.

The protein localises to the nucleus. This is Putative double homeobox protein 3 (DUX3) from Homo sapiens (Human).